Consider the following 98-residue polypeptide: Class II hydrophobin 5 (98 aa).

The first 17 residues, 1-17, serve as a signal peptide directing secretion; sequence MQFSLALVTLLATAVSA. Disulfide bonds link C30–C78, C39–C69, C40–C52, and C79–C90.

Belongs to the cerato-ulmin hydrophobin family.

It localises to the secreted. It is found in the cell wall. Functionally, aerial growth, conidiation, and dispersal of filamentous fungi in the environment rely upon a capability of their secreting small amphipathic proteins called hydrophobins (HPBs) with low sequence identity. Class I can self-assemble into an outermost layer of rodlet bundles on aerial cell surfaces, conferring cellular hydrophobicity that supports fungal growth, development and dispersal; whereas Class II form highly ordered films at water-air interfaces through intermolecular interactions but contribute nothing to the rodlet structure. Does not seem to be important for the ability to cause seedling disease. This Gibberella moniliformis (Maize ear and stalk rot fungus) protein is Class II hydrophobin 5.